The primary structure comprises 206 residues: High frequency lysogenization protein HflD homolog (206 aa).

This sequence belongs to the HflD family.

It localises to the cytoplasm. It is found in the cell inner membrane. This chain is High frequency lysogenization protein HflD homolog, found in Pseudomonas syringae pv. tomato (strain ATCC BAA-871 / DC3000).